A 100-amino-acid polypeptide reads, in one-letter code: NADH-quinone oxidoreductase subunit K (100 aa).

3 consecutive transmembrane segments (helical) span residues Met1–Gly21, Ile28–Ala48, and Phe64–Phe84.

The protein belongs to the complex I subunit 4L family. As to quaternary structure, NDH-1 is composed of 14 different subunits. Subunits NuoA, H, J, K, L, M, N constitute the membrane sector of the complex.

It is found in the cell inner membrane. The enzyme catalyses a quinone + NADH + 5 H(+)(in) = a quinol + NAD(+) + 4 H(+)(out). NDH-1 shuttles electrons from NADH, via FMN and iron-sulfur (Fe-S) centers, to quinones in the respiratory chain. The immediate electron acceptor for the enzyme in this species is believed to be ubiquinone. Couples the redox reaction to proton translocation (for every two electrons transferred, four hydrogen ions are translocated across the cytoplasmic membrane), and thus conserves the redox energy in a proton gradient. This is NADH-quinone oxidoreductase subunit K from Helicobacter pylori (strain P12).